Consider the following 535-residue polypeptide: CTP synthase (535 aa).

An amidoligase domain region spans residues 1–266 (MKTKFIFITG…DEQVVEKLNI (266 aa)). A CTP-binding site is contributed by S14. UTP is bound at residue S14. ATP-binding positions include 15–20 (SIGKGL) and D72. Positions 72 and 140 each coordinate Mg(2+). CTP-binding positions include 147–149 (DIE), 187–192 (KTKPTQ), and K223. Residues 187 to 192 (KTKPTQ) and K223 each bind UTP. In terms of domain architecture, Glutamine amidotransferase type-1 spans 292 to 534 (RIAIVGKYVN…IGASLTHRNQ (243 aa)). G354 serves as a coordination point for L-glutamine. Catalysis depends on C381, which acts as the Nucleophile; for glutamine hydrolysis. L-glutamine-binding positions include 382 to 385 (LGMQ), E405, and R462. Catalysis depends on residues H507 and E509.

Belongs to the CTP synthase family. Homotetramer.

It catalyses the reaction UTP + L-glutamine + ATP + H2O = CTP + L-glutamate + ADP + phosphate + 2 H(+). It carries out the reaction L-glutamine + H2O = L-glutamate + NH4(+). The catalysed reaction is UTP + NH4(+) + ATP = CTP + ADP + phosphate + 2 H(+). It functions in the pathway pyrimidine metabolism; CTP biosynthesis via de novo pathway; CTP from UDP: step 2/2. Its activity is regulated as follows. Allosterically activated by GTP, when glutamine is the substrate; GTP has no effect on the reaction when ammonia is the substrate. The allosteric effector GTP functions by stabilizing the protein conformation that binds the tetrahedral intermediate(s) formed during glutamine hydrolysis. Inhibited by the product CTP, via allosteric rather than competitive inhibition. Functionally, catalyzes the ATP-dependent amination of UTP to CTP with either L-glutamine or ammonia as the source of nitrogen. Regulates intracellular CTP levels through interactions with the four ribonucleotide triphosphates. The polypeptide is CTP synthase (Trichlorobacter lovleyi (strain ATCC BAA-1151 / DSM 17278 / SZ) (Geobacter lovleyi)).